A 242-amino-acid polypeptide reads, in one-letter code: Probable transcriptional regulatory protein XOO1543 (242 aa).

It belongs to the TACO1 family.

The protein localises to the cytoplasm. The protein is Probable transcriptional regulatory protein XOO1543 of Xanthomonas oryzae pv. oryzae (strain MAFF 311018).